Here is a 1174-residue protein sequence, read N- to C-terminus: RecBCD enzyme subunit RecB (1174 aa).

The tract at residues methionine 1 to leucine 852 is DNA-binding and helicase activity, interacts with RecC. The UvrD-like helicase ATP-binding domain maps to aspartate 4 to serine 449. Alanine 25–threonine 32 is an ATP binding site. The UvrD-like helicase C-terminal domain occupies proline 479 to glycine 745. Positions threonine 900–serine 1174 are nuclease activity, interacts with RecD and RecA. 3 residues coordinate Mg(2+): histidine 957, aspartate 1068, and aspartate 1081. The active-site For nuclease activity is the aspartate 1081.

The protein belongs to the helicase family. UvrD subfamily. In terms of assembly, heterotrimer of RecB, RecC and RecD. All subunits contribute to DNA-binding. Interacts with RecA. Mg(2+) is required as a cofactor.

It carries out the reaction Exonucleolytic cleavage (in the presence of ATP) in either 5'- to 3'- or 3'- to 5'-direction to yield 5'-phosphooligonucleotides.. The enzyme catalyses Couples ATP hydrolysis with the unwinding of duplex DNA by translocating in the 3'-5' direction.. It catalyses the reaction ATP + H2O = ADP + phosphate + H(+). A helicase/nuclease that prepares dsDNA breaks (DSB) for recombinational DNA repair. Binds to DSBs and unwinds DNA via a highly rapid and processive ATP-dependent bidirectional helicase activity. Unwinds dsDNA until it encounters a Chi (crossover hotspot instigator) sequence from the 3' direction. Cuts ssDNA a few nucleotides 3' to the Chi site. The properties and activities of the enzyme are changed at Chi. The Chi-altered holoenzyme produces a long 3'-ssDNA overhang and facilitates RecA-binding to the ssDNA for homologous DNA recombination and repair. Holoenzyme degrades any linearized DNA that is unable to undergo homologous recombination. In the holoenzyme this subunit contributes ATPase, 3'-5' helicase, exonuclease activity and loads RecA onto ssDNA. This is RecBCD enzyme subunit RecB from Buchnera aphidicola subsp. Acyrthosiphon pisum (strain APS) (Acyrthosiphon pisum symbiotic bacterium).